Consider the following 376-residue polypeptide: Ribosomal RNA large subunit methyltransferase G (376 aa).

Belongs to the methyltransferase superfamily. RlmG family.

Its subcellular location is the cytoplasm. The enzyme catalyses guanosine(1835) in 23S rRNA + S-adenosyl-L-methionine = N(2)-methylguanosine(1835) in 23S rRNA + S-adenosyl-L-homocysteine + H(+). In terms of biological role, specifically methylates the guanine in position 1835 (m2G1835) of 23S rRNA. This Klebsiella pneumoniae (strain 342) protein is Ribosomal RNA large subunit methyltransferase G.